The primary structure comprises 171 residues: Sigma intracellular receptor 2 (171 aa).

Over 1 to 6 (MAVCAR) the chain is Cytoplasmic. A helical membrane pass occupies residues 7-27 (LLEWIFFFYFFSHIPITLLVD). The 146-residue stretch at 8–153 (LEWIFFFYFF…PYLLVPVLLL (146 aa)) folds into the EXPERA domain. The Lumenal segment spans residues 28-66 (LQAVLPPSLYPQELLDLMKWYTVAFKDHLMANPPPWFKS). Residues 67–87 (FVYCEAILQLPFFPVAAYAFF) form a helical membrane-spanning segment. Residues Ile73 and Gln75 each coordinate cholesterol. At 88–97 (KGGCKWIRIP) the chain is on the cytoplasmic side. A helical transmembrane segment spans residues 98–118 (AIVYSAHVATTVIAIIGHILF). At 119-137 (GEFPKSDVIAPLTQKDRLT) the chain is on the lumenal side. The helical transmembrane segment at 138–158 (LVSIYAPYLLVPVLLLLTMLF) threads the bilayer. At 159 to 171 (SPRYRQEEKRKRK) the chain is on the cytoplasmic side. The short motif at 167–171 (KRKRK) is the ER retention motif element.

The protein belongs to the TMEM97/sigma-2 receptor family. Homodimer.

The protein localises to the rough endoplasmic reticulum membrane. The protein resides in the nucleus membrane. In terms of biological role, sigma-2 receptor which contributes to ameliorate dysfunctional cellular processes and slow degenerative progression by regulating cell functions including cholesterol biosynthesis/trafficking, membrane trafficking, autophagy, lipid membrane-bound protein trafficking, and receptor stabilization at the cell surface. Forms a ternary complex with PGRMC1 receptor and low density lipoprotein receptor/LDLR at the plasma membrane, which increases LDLR-mediated LDL cholesterol internalization. Decreases lysosomal sterol transporter NPC1 availability to the cell, probably through NPC1-binding, hence controlling lipid transport, including cholesterol and LBPA, outside of late endosome/lysosome. Binds regio- and stereoselective ligand 20(S)-hydroxycholesterol (20(S)-OHC), thereby linking OHC binding to cholesterol homeostasis. Also able to bind cholesterol. Binds histatin 1 (Hst 1)/HN1 salivary peptide at the ER membrane, which is critical for increasing mitochondria-ER contacts and stimulating Hst1 wound healing properties. May alter the activity of some cytochrome P450 proteins. Although shows homologies with sterol isomerases (EXPERA domain), not able to catalyze sterol isomerization. However, may act as sensors of these molecules. Acts as a quality control factor in the ER, promoting the proteolytic degradation of nonproductive and extramitochondrial precursor proteins in the ER membrane thus removing them from the ER surface. The polypeptide is Sigma intracellular receptor 2 (tmem97) (Xenopus tropicalis (Western clawed frog)).